Consider the following 687-residue polypeptide: Polyphosphate kinase (687 aa).

N45 lines the ATP pocket. Residues R375 and R405 each contribute to the Mg(2+) site. Residue H435 is the Phosphohistidine intermediate of the active site. Y472, R568, and H596 together coordinate ATP.

It belongs to the polyphosphate kinase 1 (PPK1) family. Mg(2+) is required as a cofactor. In terms of processing, an intermediate of this reaction is the autophosphorylated ppk in which a phosphate is covalently linked to a histidine residue through a N-P bond.

The catalysed reaction is [phosphate](n) + ATP = [phosphate](n+1) + ADP. Catalyzes the reversible transfer of the terminal phosphate of ATP to form a long-chain polyphosphate (polyP). This chain is Polyphosphate kinase, found in Burkholderia vietnamiensis (strain G4 / LMG 22486) (Burkholderia cepacia (strain R1808)).